Here is a 202-residue protein sequence, read N- to C-terminus: Small ribosomal subunit protein uS4c (202 aa).

Residues 90–148 enclose the S4 RNA-binding domain; sequence MRLDNVIFRLGMSSTIPGARQLVNHRHIMINDEMVDTPGYNCKPRDIITLKNISESRSG.

This sequence belongs to the universal ribosomal protein uS4 family. Part of the 30S ribosomal subunit. Contacts protein S5. The interaction surface between S4 and S5 is involved in control of translational fidelity.

Its subcellular location is the plastid. It is found in the chloroplast. Functionally, one of the primary rRNA binding proteins, it binds directly to 16S rRNA where it nucleates assembly of the body of the 30S subunit. With S5 and S12 plays an important role in translational accuracy. The polypeptide is Small ribosomal subunit protein uS4c (rps4) (Haplomitrium hookeri (Hooker's flapwort)).